A 499-amino-acid polypeptide reads, in one-letter code: Leukocyte immunoglobulin-like receptor subfamily A member 4 (499 aa).

The first 23 residues, 1 to 23, serve as a signal peptide directing secretion; sequence MTLILTSLLFFGLSLGPRTRVQA. Ig-like C2-type domains are found at residues 24–118, 123–213, 224–313, and 324–413; these read ENLL…LVVT, PTLS…SDPL, PSLL…DPLD, and PSLS…SEPL. Residues 24–446 are Extracellular-facing; the sequence is ENLLKPILWA…PHLQDYTVEN (423 aa). A disulfide bridge connects residues C49 and C98. N-linked (GlcNAc...) asparagine glycosylation occurs at N138. C143 and C195 form a disulfide bridge. N-linked (GlcNAc...) asparagine glycans are attached at residues N239, N279, and N300. A disulfide bridge connects residues C244 and C295. Residues C344 and C395 are joined by a disulfide bond. Y404 bears the 3'-nitrotyrosine mark. Residues 447-467 traverse the membrane as a helical segment; sequence LIRMGVAGLVLLFLGILLFEA. Topologically, residues 468–499 are cytoplasmic; the sequence is QHSQRSPPRCSQEANSRKDNAPFRVVEPWEQI.

As to quaternary structure, interacts with FCER1G; this stabilizes the expression of both proteins at the cell membrane. Interacts with BST2; leads to activation of LILRA4-mediated signaling and down-regulation of the innate immune response to viral pathogens. In terms of tissue distribution, detected on plasmacytoid dendritic cells (at protein level). Detected on plasmacytoid dendritic cells, but not on monocytes or B cells.

The protein resides in the cell membrane. Functionally, functions coreceptor to limit the innate immune responses to viral infections; signaling occurs via FCER1G. Down-regulates the production of IFNA1, IFNA2, IFNA4, IFNB1 and TNF by plasmacytoid dendritic cells that have been exposed to influenza virus or cytidine-phosphate-guanosine (CpG) dinucleotides, indicating it functions as a negative regulator of TLR7 and TLR9 signaling cascades. Down-regulates interferon production in response to interaction with BST2 on HIV-1 infected cells. Activates a signaling cascade in complex with FCER1G that results in phosphorylation of Src family and Syk kinases and thereby triggers mobilization of intracellular Ca(2+). Does not interfere with the differentiation of plasmacytoid dendritic cells into antigen-presenting cells. This chain is Leukocyte immunoglobulin-like receptor subfamily A member 4, found in Homo sapiens (Human).